The following is a 2188-amino-acid chain: METIKSIADMATGFTNTIDSTVNAVTEGVSKIGNDSGGEILTKVADDASNLLGPNCVASTSQPENKDVVQATTTVNTLTNLTQHPSAPTMPFTPDFSNVDVFHSMAYDITTGDKNPSKLIRLDTTTWQHTWPRQHLINDVELPKAFWDKNSKPAYGQSRYFAAVRCGFHFQVQINVNQGTAGCALVVYEPKPIVTHGGHLEFGSYTNLPHVLMNLAETTQADLCIPYVSDTNYVKTDSSDLGRLRVYVWTPLTIPSSATNDVDVTVLGSLLQLDFQNPRTYDTDVNIYDNSPLDTKTKYGKLRFSKKILSMSTKYKWTRNKIDIAEGPGSMNMANVLSTTGAQSIALVGERAFYDPRTAGSKSRFGDMIHIAQLFSVMSDTTTPSTSSGIDDLGYLDWSATYVPQQVIHRNVVKLNQFSNLKPFVNAYTYFRGSLVLRMSVYASTFNRGRLRMGFFPNFTTNTTSEMDNAIYTICDIGSDNSFEITIPYTFSTWMRKTNGRPIGLFQVEVLNRLTYNSSCPNKVHCIVQGRLGNDARFYCPTGSLVEFQNSWGSQMDLTDPLCVEDDEAEDCKQTISPDELGLTSAQDDGPLGVEKPNYFLNFRAINVDIFTVSHTKVDNIFGRAWLALEHTFADDGTWRADLNFPTQGHGTLTRLFTYYSGELNVHVLYLSDNGFLRVTHAYDHDNDRSNFLSSNGVITVPAGEQMTLSVPFYSSKPLRTIRETGALGKLICKPLLSGTHSGKIEVYLSLRCPNLFFPSPAPKEKTSRALRGDLANFIDQSPYGQQQQTQMMKLAYLDRGFYKHYGIIVGGYVYQLDSDDIFKTALTGKARFTKTRLTPDWIVEEECELDYFRVKYLESSVNSEHIFSVDSNCETIAKDIFGTHTLSQHQAIGLVGAILLTAGLMSTIKTPVNATTIKEFFNHAIDGDEQGLSLLVQKCTTFFSSAATEILDNDLVKFIVKILVRILCYMVLYCHKPNILTTACLSTLLIMDVTSSSVLSPSCKALMQCLMDGDVKKLAEVVAESMSNTDDDEIKEQICDTVKYTKTILSNQGPFKGFNEVSTAFRHVDWWIHTLLKIKDMVLSVFKPSIESKAIQWLERNKEHVCSILDYASDIIVESKDQTKMKTQEFYQRYSDCLAKFKPIMAICFRSCHNSISNTVYRLFQELARIPNRISTQNDLIRVEPIGVWIQGEPGQGKSFLTHTLSRQLQKSCKLNGVYTNPTASEFMDGYDNQDIHLIDDLGQTRKEKDIEMLCNCISSVPFIVPMAHLEEKGKFYTSKLVIATTNKSDFSSTVLQDSGALKRRFPYIMHIRAAKAYSKSGKLNVSQAMSTMSTGECWEVSKNGRDWETLKLKDLVQKITEDYQERQKNYNAWKQQLENQTLDDLDDAVSYIKHNFPDAIPYIDEYLNIEMSTLIEQMEAFIEPRPSVFKCFAVKLPHKPGKQPRKLWAGSAGKIKSMLSFIERNKAWLTVVSAVTSAISILLLVTKIFKKEESKDERAYNPTLPITKPKGTFPVSQREFKNEAPYDGQLEHIISQMAYITGSTTGHLTHCAGYQHDEIILHGHSIKYLEQEEDLTLHYKNKVFPIENPSVTQVTLGGKPMDLAILKCKLPFRFKKNSKYYTNKIGTESMLIWMTEQGIITKEVQRVHHSGGIKTREGTESTKTISYTVKSCKGMCGGLLISKVEGNFKILGMHIAGNGEMGVAIPFNFLKNDMSDQGIITEVTPIQPMYINTKSQIHKSPVYGAVEVKMGPAVLSKSDTRLEEPVDCLIKKSASKYRVNKFQVNNELWQGVKACVKSKFREIFGVNGIVDMKTAILGTSHVNSMDLSTSAGYSLVKSGYKKKDLICLEPFSVSPMLEKLVQDKFHNLLKGNQITTIFNTCLKDELRKLDKIAAGKTRCIEACEVDYCIVYRMIMMEIYDKIYQTPCYYSGLAVGINPYKDWHFMINALNDYNYEMDYSQYDGSLSSMLLWEAVEVLAYCHDSPDLVMQLHKPVIDSDHVVFNERWLIHGGMPSGSPCTTVLNSLCNLMMCIYTTNLISPGVDCLPIVYGDDVILSLDREIEPERLQSIMADSFGAEVTGSRKDEPPSLKPRMEVEFLKRKPGYFPESTFIVGKLDTENMIQHLMWMKNFSTFKQQLQSYLMELCLHGKDIYQRYIKILDPYLKEWNIVVDDYDVVIAKLMPMVFD.

The short motif at 772 to 774 (RGD) is the Cell attachment site element. Residues 795–889 (LAYLDRGFYK…DIFGTHTLSQ (95 aa)) form the LRAT domain. Catalysis depends on H805, which acts as the For protein 2A H-NC. C874 serves as the catalytic For protein 2A H-NC; Acyl-thioester intermediate. In terms of domain architecture, SF3 helicase spans 1165 to 1326 (FQELARIPNR…KAYSKSGKLN (162 aa)). 1193-1200 (GEPGQGKS) provides a ligand contact to ATP. The residue at position 1502 (Y1502) is an O-(5'-phospho-RNA)-tyrosine. In terms of domain architecture, Peptidase C3 spans 1526 to 1716 (APYDGQLEHI…IPFNFLKNDM (191 aa)). Active-site for protease 3C activity residues include H1566, D1604, and C1678. The Acyl-thioester intermediate role is filled by C1905. The 115-residue stretch at 1953-2067 (DYNYEMDYSQ…SLDREIEPER (115 aa)) folds into the RdRp catalytic domain. Residues D1959 and D2053 each contribute to the Mg(2+) site.

This sequence belongs to the picornaviruses polyprotein family. As to quaternary structure, interacts with capsid protein VP1 and capsid protein VP3 to form heterotrimeric protomers. Five protomers subsequently associate to form pentamers which serve as building blocks for the capsid. In terms of assembly, interacts with capsid protein VP0, and capsid protein VP3 to form heterotrimeric protomers. Five protomers subsequently associate to form pentamers which serve as building blocks for the capsid. Interacts with capsid protein VP0 and capsid protein VP1 to form heterotrimeric protomers. Five protomers subsequently associate to form pentamers which serve as building blocks for the capsid. As to quaternary structure, homohexamer; forms a hexameric ring structure with 6-fold symmetry characteristic of AAA+ ATPases. In terms of assembly, homodimer. Interacts with host ACBD3. Interacts with RNA-directed RNA polymerase. As to quaternary structure, interacts with Viral protein genome-linked. Requires Mg(2+) as cofactor. Post-translationally, VPg is uridylylated by the polymerase and is covalently linked to the 5'-end of genomic RNA. This uridylylated form acts as a nucleotide-peptide primer for the polymerase. Specific enzymatic cleavages yield mature proteins. All cleavages are catalyzed by P3C.

The protein resides in the virion. It localises to the host cytoplasm. Its subcellular location is the host nucleus. It is found in the host nucleolus. The protein localises to the host cytoplasmic vesicle membrane. The enzyme catalyses RNA(n) + a ribonucleoside 5'-triphosphate = RNA(n+1) + diphosphate. The catalysed reaction is a ribonucleoside 5'-triphosphate + H2O = a ribonucleoside 5'-diphosphate + phosphate + H(+). It carries out the reaction Selective cleavage of Gln-|-Gly bond in the poliovirus polyprotein. In other picornavirus reactions Glu may be substituted for Gln, and Ser or Thr for Gly.. Its function is as follows. Forms an icosahedral capsid of pseudo T=3 symmetry together with capsid proteins VP1 and VP3. The capsid is 300 Angstroms in diameter, composed of 60 copies of each capsid protein and enclosing the viral positive strand RNA genome. Capsid proteins interact with host alpha-V/beta-3 integrin heterodimer to provide virion attachment target cell. This attachment induces virion internalization predominantly through clathrin-mediated endocytosis. Binds packaging signals present in the viral RNA. Forms an icosahedral capsid of pseudo T=3 symmetry together with capsid proteins VP0 and VP1. The capsid is 300 Angstroms in diameter, composed of 60 copies of each capsid protein and enclosing the viral positive strand RNA genome. Capsid proteins interact with host alpha-V/beta-3 integrin heterodimer to provide virion attachment target cell. This attachment induces virion internalization predominantly through clathrin-mediated endocytosis. Binds packaging signals present in the viral RNA. In terms of biological role, forms an icosahedral capsid of pseudo T=3 symmetry together with capsid proteins VP0 and VP3. The capsid is 300 Angstroms in diameter, composed of 60 copies of each capsid protein and enclosing the viral positive strand RNA genome. Capsid proteins interact with host alpha-V/beta-3 integrin heterodimer to provide virion attachment target cell. This attachment induces virion internalization predominantly through clathrin-mediated endocytosis. Binds packaging signals present in the viral RNA. Functionally, is not a protease. Its function is as follows. Plays an essential role in the virus replication cycle by acting as a viroporin. Creates a pore in the host endoplasmic reticulum and as a consequence releases Ca2+ in the cytoplasm of infected cell. In turn, high levels of cytoplasmic calcium may trigger membrane trafficking and transport of viral ER-associated proteins to viroplasms, sites of viral genome replication. Induces and associates with structural rearrangements of intracellular membranes. Displays RNA-binding, nucleotide binding and NTPase activities. May play a role in virion morphogenesis and viral RNA encapsidation by interacting with the capsid protein VP3. In terms of biological role, localizes the viral replication complex to the surface of membranous vesicles. It inhibits host cell endoplasmic reticulum-to-Golgi apparatus transport and causes the disassembly of the Golgi complex, possibly through GBF1 interaction. This would result in depletion of MHC, trail receptors and IFN receptors at the host cell surface. Plays an essential role in viral RNA replication by recruiting ACBD3 and PI4KB at the viral replication sites, thereby allowing the formation of the rearranged membranous structures where viral replication takes place. Functionally, acts as a primer for viral RNA replication and remains covalently bound to viral genomic RNA. VPg is uridylylated prior to priming replication into VPg-pUpU. The VPg-pUpU is then used as primer on the genomic RNA poly(A) by the RNA-dependent RNA polymerase to replicate the viral genome. Following genome release from the infecting virion in the cytoplasm, the VPg-RNA linkage is probably removed by host TDP2. During the late stage of the replication cycle, host TDP2 is excluded from sites of viral RNA synthesis and encapsidation, allowing for the generation of progeny virions. Its function is as follows. Cysteine protease that generates mature viral proteins from the precursor polyprotein. In addition to its proteolytic activity, it binds to viral RNA, and thus influences viral genome replication. RNA and substrate bind cooperatively to the protease. Replicates the viral genomic RNA on the surface of intracellular membranes. Covalently attaches UMP to a tyrosine of VPg, which is used to prime RNA synthesis. The positive stranded RNA genome is first replicated at virus induced membranous vesicles, creating a dsRNA genomic replication form. This dsRNA is then used as template to synthesize positive stranded RNA genomes. ss(+)RNA genomes are either translated, replicated or encapsidated. The chain is Genome polyprotein from Human parechovirus 5 (strain CT86-6760) (HPeV-5).